The sequence spans 1073 residues: Carbamoyl phosphate synthase large chain (1073 aa).

Residues methionine 1–glutamate 403 are carboxyphosphate synthetic domain. 12 residues coordinate ATP: arginine 129, arginine 169, glycine 175, glycine 176, glutamate 208, leucine 210, glutamate 215, glycine 241, valine 242, histidine 243, glutamine 285, and glutamate 299. The ATP-grasp 1 domain maps to aspartate 133 to valine 328. Residues glutamine 285, glutamate 299, and asparagine 301 each coordinate Mg(2+). Glutamine 285, glutamate 299, and asparagine 301 together coordinate Mn(2+). Positions valine 404–alanine 553 are oligomerization domain. Positions asparagine 554–serine 935 are carbamoyl phosphate synthetic domain. Residues glutamine 678–alanine 869 form the ATP-grasp 2 domain. ATP-binding residues include arginine 714, histidine 753, leucine 755, glutamate 760, glycine 785, valine 786, histidine 787, serine 788, glutamine 828, and glutamate 840. The Mg(2+) site is built by glutamine 828, glutamate 840, and asparagine 842. Mn(2+) contacts are provided by glutamine 828, glutamate 840, and asparagine 842. The region spanning glutamate 936–alanine 1073 is the MGS-like domain. The tract at residues glutamate 936 to alanine 1073 is allosteric domain.

This sequence belongs to the CarB family. In terms of assembly, composed of two chains; the small (or glutamine) chain promotes the hydrolysis of glutamine to ammonia, which is used by the large (or ammonia) chain to synthesize carbamoyl phosphate. Tetramer of heterodimers (alpha,beta)4. The cofactor is Mg(2+). It depends on Mn(2+) as a cofactor.

It carries out the reaction hydrogencarbonate + L-glutamine + 2 ATP + H2O = carbamoyl phosphate + L-glutamate + 2 ADP + phosphate + 2 H(+). It catalyses the reaction hydrogencarbonate + NH4(+) + 2 ATP = carbamoyl phosphate + 2 ADP + phosphate + 2 H(+). It participates in amino-acid biosynthesis; L-arginine biosynthesis; carbamoyl phosphate from bicarbonate: step 1/1. Its pathway is pyrimidine metabolism; UMP biosynthesis via de novo pathway; (S)-dihydroorotate from bicarbonate: step 1/3. Large subunit of the glutamine-dependent carbamoyl phosphate synthetase (CPSase). CPSase catalyzes the formation of carbamoyl phosphate from the ammonia moiety of glutamine, carbonate, and phosphate donated by ATP, constituting the first step of 2 biosynthetic pathways, one leading to arginine and/or urea and the other to pyrimidine nucleotides. The large subunit (synthetase) binds the substrates ammonia (free or transferred from glutamine from the small subunit), hydrogencarbonate and ATP and carries out an ATP-coupled ligase reaction, activating hydrogencarbonate by forming carboxy phosphate which reacts with ammonia to form carbamoyl phosphate. The sequence is that of Carbamoyl phosphate synthase large chain from Pseudomonas syringae pv. tomato (strain ATCC BAA-871 / DC3000).